Consider the following 195-residue polypeptide: MSYIPYVVEQTGRGERSYDIYSRLLKDRIIMLSGEVNDQVASSIVAQLLFLEAQDPDKDIYFYINSPGGVITSGLSMFDTMNYIKPDIVTICIGQAASMGAFLLASGTKGKRYALPHARIMIHQPSGGAQGQSTDIQIQAQEIQRLKDTLNEIMAEKTGKTAKRIEKDTERDNFMSAKEAVEYGLIDKVLTKSFT.

Residue Ser98 is the Nucleophile of the active site. The active site involves His123.

It belongs to the peptidase S14 family. Fourteen ClpP subunits assemble into 2 heptameric rings which stack back to back to give a disk-like structure with a central cavity, resembling the structure of eukaryotic proteasomes.

It localises to the cytoplasm. The catalysed reaction is Hydrolysis of proteins to small peptides in the presence of ATP and magnesium. alpha-casein is the usual test substrate. In the absence of ATP, only oligopeptides shorter than five residues are hydrolyzed (such as succinyl-Leu-Tyr-|-NHMec, and Leu-Tyr-Leu-|-Tyr-Trp, in which cleavage of the -Tyr-|-Leu- and -Tyr-|-Trp bonds also occurs).. In terms of biological role, cleaves peptides in various proteins in a process that requires ATP hydrolysis. Has a chymotrypsin-like activity. Plays a major role in the degradation of misfolded proteins. The chain is ATP-dependent Clp protease proteolytic subunit from Sulfurovum sp. (strain NBC37-1).